Here is a 1463-residue protein sequence, read N- to C-terminus: Kinesin-like protein KIF15 (1463 aa).

The 337-residue stretch at 18 to 354 folds into the Kinesin motor domain; it reads AIKVFVRVRP…LKFARRAKMI (337 aa). ATP is bound at residue 99-106; sequence GQTGSGKT. Positions 387–424 are disordered; it reads AEGSIPRGPSESGDSQMSNSSTESNGPVSGQQSGSSSS. The span at 398–414 shows a compositional bias: polar residues; it reads SGDSQMSNSSTESNGPV. Over residues 415 to 424 the composition is skewed to low complexity; the sequence is SGQQSGSSSS. Coiled coils occupy residues 436-517 and 586-646; these read SLRD…LEHN and TSTL…QGMK. 3 disordered regions span residues 686 to 720, 1335 to 1356, and 1409 to 1444; these read AGEETPGGPGFAGLSDNGSPLRSHSTNSLPPSGDI, FKEKEDIKSKLEEEREEKSKLT, and QLGKAQSDSEQMKRDYEALQKRLTSSSAEPPEEAGA. Residues 701–715 show a composition bias toward polar residues; the sequence is DNGSPLRSHSTNSLP. Residues 1418-1428 show a composition bias toward basic and acidic residues; it reads EQMKRDYEALQ.

This sequence belongs to the TRAFAC class myosin-kinesin ATPase superfamily. Kinesin family. KLP2 subfamily. In terms of assembly, homodimer.

Its subcellular location is the cytoplasm. It localises to the cytoskeleton. The protein resides in the spindle. Its function is as follows. Plus-end directed kinesin-like motor enzyme involved in mitotic spindle assembly. Plays a role in positioning spindle poles during mitosis, specifically at prometaphase. This chain is Kinesin-like protein KIF15 (KIF15), found in Strongylocentrotus purpuratus (Purple sea urchin).